A 167-amino-acid chain; its full sequence is MADEATRRVVSEIPVLKTNAGPRDRELWVQRLKEEYQSLIRYVENNKNADNDWFRLESNKEGTRWFGKCWYIHDLLKYEFDIEFDIPITYPTTAPEIAVPELDGKTAKMYRGGKICLTDHFKPLWARNVPKFGLAHLMALGLGPWLAVEIPDLIQKGVIQHKEKCNQ.

Cys-116 serves as the catalytic Glycyl thioester intermediate. Residue Lys-122 forms a Glycyl lysine isopeptide (Lys-Gly) (interchain with G-Cter in UFM1) linkage.

This sequence belongs to the ubiquitin-conjugating enzyme family. UFC1 subfamily. Interacts with UBA5 (via C-terminus). Interacts with UFL1. Interacts with UFM1. Interacts with KIRREL3. Post-translationally, ufmylated at Lys-122. Deufmylated by UFSP1.

Functionally, E2-like enzyme which specifically catalyzes the second step in ufmylation. Accepts the ubiquitin-like modifier UFM1 from the E1 enzyme UBA5 and forms an intermediate with UFM1 via a thioester linkage. Ufmylation is involved in various processes, such as ribosome recycling, response to DNA damage, interferon response or reticulophagy (also called ER-phagy). The sequence is that of Ubiquitin-fold modifier-conjugating enzyme 1 from Homo sapiens (Human).